Reading from the N-terminus, the 230-residue chain is Isoprenyl transferase (230 aa).

Residue Asp14 is part of the active site. Asp14 lines the Mg(2+) pocket. Substrate contacts are provided by residues 15–18 (GNGR), Trp19, Arg27, His31, and 59–61 (STE). Catalysis depends on Asn62, which acts as the Proton acceptor. Residues Trp63, Arg65, Arg175, and 181-183 (RIS) each bind substrate. Position 194 (Glu194) interacts with Mg(2+).

This sequence belongs to the UPP synthase family. As to quaternary structure, homodimer. The cofactor is Mg(2+).

Catalyzes the condensation of isopentenyl diphosphate (IPP) with allylic pyrophosphates generating different type of terpenoids. In Fusobacterium nucleatum subsp. nucleatum (strain ATCC 25586 / DSM 15643 / BCRC 10681 / CIP 101130 / JCM 8532 / KCTC 2640 / LMG 13131 / VPI 4355), this protein is Isoprenyl transferase.